The sequence spans 144 residues: MEREGSGGGGGSAGLLQQILSLKLVPRVGNGTLCPNSTSLCSFPEMWYGVFLWALMSSVFFHVPAGLLALFTLRHHKYGRFMSVSILLMGIVGPITAGILTSAAIAGVYRAAGKEMIPFEALTLGTGQTFCVVVVSFLRVLATL.

The Extracellular segment spans residues 1-50; sequence MEREGSGGGGGSAGLLQQILSLKLVPRVGNGTLCPNSTSLCSFPEMWYGV. N-linked (GlcNAc...) asparagine glycosylation is found at Asn-30 and Asn-36. A helical transmembrane segment spans residues 51–71; that stretch reads FLWALMSSVFFHVPAGLLALF. Over 72–85 the chain is Cytoplasmic; the sequence is TLRHHKYGRFMSVS. Residues 86–106 form a helical membrane-spanning segment; it reads ILLMGIVGPITAGILTSAAIA. The Extracellular portion of the chain corresponds to 107-116; it reads GVYRAAGKEM. A helical membrane pass occupies residues 117-137; the sequence is IPFEALTLGTGQTFCVVVVSF. Topologically, residues 138-144 are cytoplasmic; that stretch reads LRVLATL.

Belongs to the TMEM170 family. Interacts with RTN4.

It is found in the endoplasmic reticulum membrane. Its subcellular location is the nucleus envelope. Its function is as follows. Acts as a regulator of endoplasmic reticulum (ER) and nuclear envelope (NE) morphogenesis. Affects the ratio between tubular ER and ER sheets by promoting sheet formation at the expense of tubules. Influences NE expansion, nuclear pore complex formation and proper localization of inner nuclear membrane proteins. This Mus musculus (Mouse) protein is Transmembrane protein 170A (Tmem170a).